Reading from the N-terminus, the 266-residue chain is Receptor-like protein 5 (266 aa).

An N-terminal signal peptide occupies residues 1–19 (MINYRHIVFCLCVMVVVDS). Over 20–169 (RLTPYLAAIE…PTRNKNKPTV (150 aa)) the chain is Extracellular. 2 LRR repeats span residues 93–117 (LTSL…ITKL) and 119–143 (NLTI…IVIL). N-linked (GlcNAc...) asparagine glycosylation is present at Asn119. The chain crosses the membrane as a helical span at residues 170-190 (LVLLLGILVGLVVAGGASFGF). Over 191–266 (YLYRIRKQPK…TNQNPHLPYM (76 aa)) the chain is Cytoplasmic.

Belongs to the RLP family.

It localises to the cell membrane. The chain is Receptor-like protein 5 from Arabidopsis thaliana (Mouse-ear cress).